The primary structure comprises 1818 residues: Unconventional myosin-Vb (1818 aa).

A Myosin N-terminal SH3-like domain is found at 8–60; the sequence is TRYTRVWIPDPDEVWRSAELTKDYKEGDKSLQLRLEDDTILEYPVDVQNNQVP. The tract at residues 21 to 40 is requires for interaction with LIMA1; the sequence is VWRSAELTKDYKEGDKSLQL. Residues 69 to 762 enclose the Myosin motor domain; sequence VGENDLTALS…QVAYLEKLRA (694 aa). Position 163-170 (163-170) interacts with ATP; sequence GESGAGKT. The interval 641–663 is actin-binding; that stretch reads LNLLMETLNATTPHYVRCIKPND. IQ domains lie at 765 to 794, 788 to 817, 813 to 842, 836 to 865, 861 to 890, and 884 to 913; these read FREATIMIQKSVRGWLQRVKYRRLRAATLS, LRAATLSLQRFCRGYLARRLAEHLRRTRAA, RTRAAIVFQKQYRMLKARRAYRRVCRATVI, VCRATVIIQSFTRAMFVRRNYRQVLMEHKA, MEHKATIIQKYARGWMARKRFLRERDAAIV, and ERDAAIVIQCAFRRLKARQELKALKIEARS. Disordered regions lie at residues 1086 to 1120 and 1161 to 1188; these read LRDEQTPGHRKNPSNQSSLESDSNYPSISTSEIGD and QAQLEKGQQDSKKGQVEQQNNGLDVDQD. Residues 1098–1118 are compositionally biased toward polar residues; sequence PSNQSSLESDSNYPSISTSEI. 2 coiled-coil regions span residues 1140–1261 and 1313–1415; these read MTVF…LILR and LEAQ…ALAQ. Ser1416 bears the Phosphoserine mark. The Dilute domain occupies 1496-1773; sequence SSTINGIKKV…IRTIQAQLQE (278 aa).

This sequence belongs to the TRAFAC class myosin-kinesin ATPase superfamily. Myosin family. In terms of assembly, component of the CART complex, at least composed of ACTN4, HGS/HRS, MYO5B and TRIM3. Interacts with RAB11FIP2. Interacts with RAB11A and RAB8A. Found in a complex with CFTR and RAB11A. Interacts with NPC1L1. Interacts with LIMA1.

The protein resides in the cytoplasm. Its function is as follows. May be involved in vesicular trafficking via its association with the CART complex. The CART complex is necessary for efficient transferrin receptor recycling but not for EGFR degradation. Required in a complex with RAB11A and RAB11FIP2 for the transport of NPC1L1 to the plasma membrane. Together with RAB11A participates in CFTR trafficking to the plasma membrane and TF (transferrin) recycling in nonpolarized cells. Together with RAB11A and RAB8A participates in epithelial cell polarization. Together with RAB25 regulates transcytosis. Required for proper localization of bile salt export pump ABCB11 at the apical/canalicular plasma membrane of hepatocytes. This Mus musculus (Mouse) protein is Unconventional myosin-Vb (Myo5b).